The primary structure comprises 146 residues: Acireductone dioxygenase (146 aa).

The Fe(2+) site is built by His-71, His-73, Glu-77, and His-116. Ni(2+) contacts are provided by His-71, His-73, Glu-77, and His-116.

Belongs to the acireductone dioxygenase (ARD) family. Fe(2+) is required as a cofactor. It depends on Ni(2+) as a cofactor.

It localises to the cytoplasm. It is found in the nucleus. The enzyme catalyses 1,2-dihydroxy-5-(methylsulfanyl)pent-1-en-3-one + O2 = 4-methylsulfanyl-2-oxobutanoate + formate + 2 H(+). It catalyses the reaction 1,2-dihydroxy-5-(methylsulfanyl)pent-1-en-3-one + O2 = 3-(methylsulfanyl)propanoate + CO + formate + 2 H(+). Its pathway is amino-acid biosynthesis; L-methionine biosynthesis via salvage pathway; L-methionine from S-methyl-5-thio-alpha-D-ribose 1-phosphate: step 5/6. In terms of biological role, catalyzes 2 different reactions between oxygen and the acireductone 1,2-dihydroxy-3-keto-5-methylthiopentene (DHK-MTPene) depending upon the metal bound in the active site. Fe-containing acireductone dioxygenase (Fe-ARD) produces formate and 2-keto-4-methylthiobutyrate (KMTB), the alpha-ketoacid precursor of methionine in the methionine recycle pathway. Ni-containing acireductone dioxygenase (Ni-ARD) produces methylthiopropionate, carbon monoxide and formate, and does not lie on the methionine recycle pathway. The sequence is that of Acireductone dioxygenase from Heterostelium pallidum (strain ATCC 26659 / Pp 5 / PN500) (Cellular slime mold).